Here is a 739-residue protein sequence, read N- to C-terminus: Polyribonucleotide nucleotidyltransferase (739 aa).

Mg(2+) is bound by residues Asp-514 and Asp-520. The region spanning 580–639 (PRIITVKIPVDKIGEVIGPKGKMINQIQEDTGADITIEDDGTIYIGAAQGSQAEAARATI) is the KH domain. The S1 motif domain occupies 651-723 (GERYLGTVVK…SRGKLSLIPV (73 aa)).

It belongs to the polyribonucleotide nucleotidyltransferase family. Requires Mg(2+) as cofactor.

It is found in the cytoplasm. It catalyses the reaction RNA(n+1) + phosphate = RNA(n) + a ribonucleoside 5'-diphosphate. Its function is as follows. Involved in mRNA degradation. Catalyzes the phosphorolysis of single-stranded polyribonucleotides processively in the 3'- to 5'-direction. The polypeptide is Polyribonucleotide nucleotidyltransferase (Streptomyces coelicolor (strain ATCC BAA-471 / A3(2) / M145)).